The chain runs to 503 residues: Maturase K (503 aa).

This sequence belongs to the intron maturase 2 family. MatK subfamily.

It localises to the plastid. Its subcellular location is the chloroplast. In terms of biological role, usually encoded in the trnK tRNA gene intron. Probably assists in splicing its own and other chloroplast group II introns. In Panax ginseng (Korean ginseng), this protein is Maturase K.